Consider the following 72-residue polypeptide: DNA gyrase inhibitor YacG (72 aa).

Zn(2+) contacts are provided by Cys14, Cys17, Cys33, and Cys37.

This sequence belongs to the DNA gyrase inhibitor YacG family. Interacts with GyrB. It depends on Zn(2+) as a cofactor.

In terms of biological role, inhibits all the catalytic activities of DNA gyrase by preventing its interaction with DNA. Acts by binding directly to the C-terminal domain of GyrB, which probably disrupts DNA binding by the gyrase. The chain is DNA gyrase inhibitor YacG from Mannheimia succiniciproducens (strain KCTC 0769BP / MBEL55E).